Reading from the N-terminus, the 126-residue chain is Copper resistance protein C (126 aa).

The N-terminal stretch at 1–23 is a signal peptide; it reads MSILNKAILTGGLVMGVAFSAMA. His-24 contacts Cu(2+). Residues Met-63, Met-66, Met-69, His-72, and Met-75 each coordinate Cu(+). Residue His-115 participates in Cu(2+) binding.

The protein belongs to the CopC family. In terms of assembly, monomer-dimer equilibrium in solution for the apo protein. Dimerization is significantly enhanced upon binding of copper(I).

The protein resides in the periplasm. Its function is as follows. Copper-binding protein involved in copper resistance. This Escherichia coli protein is Copper resistance protein C.